A 173-amino-acid chain; its full sequence is Crossover junction endodeoxyribonuclease RuvC (173 aa).

Residues Asp-8, Glu-67, and Asp-139 contribute to the active site. Mg(2+) contacts are provided by Asp-8, Glu-67, and Asp-139.

It belongs to the RuvC family. Homodimer which binds Holliday junction (HJ) DNA. The HJ becomes 2-fold symmetrical on binding to RuvC with unstacked arms; it has a different conformation from HJ DNA in complex with RuvA. In the full resolvosome a probable DNA-RuvA(4)-RuvB(12)-RuvC(2) complex forms which resolves the HJ. Mg(2+) serves as cofactor.

It is found in the cytoplasm. The catalysed reaction is Endonucleolytic cleavage at a junction such as a reciprocal single-stranded crossover between two homologous DNA duplexes (Holliday junction).. Functionally, the RuvA-RuvB-RuvC complex processes Holliday junction (HJ) DNA during genetic recombination and DNA repair. Endonuclease that resolves HJ intermediates. Cleaves cruciform DNA by making single-stranded nicks across the HJ at symmetrical positions within the homologous arms, yielding a 5'-phosphate and a 3'-hydroxyl group; requires a central core of homology in the junction. The consensus cleavage sequence is 5'-(A/T)TT(C/G)-3'. Cleavage occurs on the 3'-side of the TT dinucleotide at the point of strand exchange. HJ branch migration catalyzed by RuvA-RuvB allows RuvC to scan DNA until it finds its consensus sequence, where it cleaves and resolves the cruciform DNA. The sequence is that of Crossover junction endodeoxyribonuclease RuvC from Shewanella sediminis (strain HAW-EB3).